A 444-amino-acid chain; its full sequence is MRNIIYFILSLLFSVTSYALETINIEHGRADPTPIAVNKFDADNSAADVLGHDMVKVISNDLKLSGLFRPISAASFIEEKTGIEYKPLFAAWRQINASLLVNGEVKKLESGKFKVSFILWDTLLEKQLAGEMLEVPKNLWRRAAHKIADKIYEKITGDAGYFDTKIVYVSESSSLPKIKRIALMDYDGANNKYLTNGKSLVLTPRFARSADKIFYVSYATKRRVLVYEKDLKTGKESVVGDFPGISFAPRFSPDGRKAVMSIAKNGSTHIYEIDLATKRLHKLTDGFGINTSPSYSPDGKKIVYNSDRNGVPQLYIMNSDGSDVQRISFGGGSYAAPSWSPRGDYIAFTKITKGDGGKTFNIGIMKACPQDDENSEKIITSGYLVESPCWSPNGRVIMFAKGWPSSAKAPGKNKIFAIDLTGHNEREIMTPADASDPEWSGVLN.

A signal peptide spans 1 to 19; that stretch reads MRNIIYFILSLLFSVTSYA.

This sequence belongs to the TolB family. The Tol-Pal system is composed of five core proteins: the inner membrane proteins TolA, TolQ and TolR, the periplasmic protein TolB and the outer membrane protein Pal. They form a network linking the inner and outer membranes and the peptidoglycan layer.

Its subcellular location is the periplasm. In terms of biological role, part of the Tol-Pal system, which plays a role in outer membrane invagination during cell division and is important for maintaining outer membrane integrity. This is Tol-Pal system protein TolB from Rickettsia africae (strain ESF-5).